The sequence spans 394 residues: Elongation factor Tu 2 (394 aa).

Positions 9-204 constitute a tr-type G domain; that stretch reads KPHCNIGTIG…SIDDYIPQPT (196 aa). A G1 region spans residues 18-25; it reads GHVDHGKT. 18 to 25 lines the GTP pocket; the sequence is GHVDHGKT. Thr25 is a binding site for Mg(2+). The tract at residues 61 to 65 is G2; that stretch reads GITIQ. Positions 82–85 are G3; sequence DCPG. Residues 82 to 86 and 137 to 140 each bind GTP; these read DCPGH and NKID. Residues 137–140 are G4; sequence NKID. The tract at residues 174 to 176 is G5; sequence SAL.

This sequence belongs to the TRAFAC class translation factor GTPase superfamily. Classic translation factor GTPase family. EF-Tu/EF-1A subfamily. As to quaternary structure, monomer.

It is found in the cytoplasm. It carries out the reaction GTP + H2O = GDP + phosphate + H(+). Functionally, GTP hydrolase that promotes the GTP-dependent binding of aminoacyl-tRNA to the A-site of ribosomes during protein biosynthesis. This Orientia tsutsugamushi (strain Boryong) (Rickettsia tsutsugamushi) protein is Elongation factor Tu 2.